The chain runs to 291 residues: MNRIQQTFQTSSAPFWYAQLELGFCYENSRTIMSHRKHYGPVRVQKMLWPEKTGVCHAIIVHPPAGIAGGDHLTFQIETEGQAHAVITTPGAGKWYRTNGKQAFQHIYLNVKDDSILEWMPQETMLFDGALAHSETDIHLEQTASFIGWDMLVLGRQARAENFVQGSYHNQFKLWRKNKLLVADTLYFEGGDRWLSSCLGMNNQAVMASFWAVPPEKFRSSFYLEQHIELIRELIMRMDVPVTLTLLEDVLCARFLGNDVRRCHDAFAAIRAKLRRYWFDLDEEFPRIWKT.

Belongs to the UreD family. In terms of assembly, ureD, UreF and UreG form a complex that acts as a GTP-hydrolysis-dependent molecular chaperone, activating the urease apoprotein by helping to assemble the nickel containing metallocenter of UreC. The UreE protein probably delivers the nickel.

Its subcellular location is the cytoplasm. Required for maturation of urease via the functional incorporation of the urease nickel metallocenter. The sequence is that of Urease accessory protein UreD from Acinetobacter baumannii (strain ATCC 17978 / DSM 105126 / CIP 53.77 / LMG 1025 / NCDC KC755 / 5377).